We begin with the raw amino-acid sequence, 393 residues long: Probable WRKY transcription factor 25 (393 aa).

Residues M160–P224 constitute a DNA-binding region (WRKY 1). Positions 191, 196, 219, and 221 each coordinate Zn(2+). 2 disordered regions span residues G217 to R242 and S277 to M303. Positions R229–N240 are enriched in polar residues. Residues P289–G298 show a composition bias toward basic and acidic residues. A DNA-binding region (WRKY 2) is located at residues S322–P387. Residues C353, C358, H382, and H384 each coordinate Zn(2+).

Belongs to the WRKY group I family. In terms of assembly, interacts with MKS1. Interacts with SIB1. Interacts with VQ10 and CAMBP25/VQ15. Phosphorylated by MPK4. As to expression, highly expressed in roots and at lower levels in leaves, stems and seeds.

It localises to the nucleus. Transcription factor. Interacts specifically with the W box (5'-(T)TGAC[CT]-3'), a frequently occurring elicitor-responsive cis-acting element. Functions with WRKY33 as positive regulator of salt stress response and abscisic acid (ABA) signaling. Plays a partial role in heat stress tolerance. Functions with WRKY26 and WRKY33 as positive regulator of plant thermotolerance by partially participating in ethylene-response signal transduction pathway. In Arabidopsis thaliana (Mouse-ear cress), this protein is Probable WRKY transcription factor 25 (WRKY25).